Reading from the N-terminus, the 306-residue chain is Erythromycin 3''-O-methyltransferase (306 aa).

Residues Leu157 and His162 each coordinate S-adenosyl-L-methionine.

Belongs to the methyltransferase superfamily.

The enzyme catalyses erythromycin C + S-adenosyl-L-methionine = erythromycin A + S-adenosyl-L-homocysteine + H(+). It carries out the reaction erythromycin D + S-adenosyl-L-methionine = erythromycin B + S-adenosyl-L-homocysteine + H(+). The protein operates within antibiotic biosynthesis; erythromycin biosynthesis. S-adenosyl-L-methionine-dependent O-methyltransferase that catalyzes the last step in the erythromycin biosynthesis pathway. Methylates the position 3 of the mycarosyl moiety of erythromycin C, forming the most active form of the antibiotic, erythromycin A. Can also methylate the precursor erythromycin D, forming erythromycin B. This Saccharopolyspora erythraea (strain ATCC 11635 / DSM 40517 / JCM 4748 / NBRC 13426 / NCIMB 8594 / NRRL 2338) protein is Erythromycin 3''-O-methyltransferase (eryG).